A 248-amino-acid polypeptide reads, in one-letter code: Probable transcriptional regulatory protein RHOS4_22610 (248 aa).

Residues 1–21 (MAGHSKWANIQHRKGKQDKLR) form a disordered region.

Belongs to the TACO1 family.

It is found in the cytoplasm. The protein is Probable transcriptional regulatory protein RHOS4_22610 of Cereibacter sphaeroides (strain ATCC 17023 / DSM 158 / JCM 6121 / CCUG 31486 / LMG 2827 / NBRC 12203 / NCIMB 8253 / ATH 2.4.1.) (Rhodobacter sphaeroides).